Consider the following 594-residue polypeptide: Nucleolar protein 56 (594 aa).

Glycyl lysine isopeptide (Lys-Gly) (interchain with G-Cter in SUMO2) cross-links involve residues lysine 87, lysine 230, and lysine 240. The region spanning 292-410 (VAPSLSALIG…VEERLSFYET (119 aa)) is the Nop domain. Serine 314 is subject to Phosphoserine. At arginine 359 the chain carries Omega-N-methylarginine. 2 stretches are compositionally biased toward low complexity: residues 458-469 (ALASSENSSSTP) and 488-504 (QEVP…ISFS). The disordered stretch occupies residues 458–594 (ALASSENSSS…KKFHKASQED (137 aa)). Phosphoserine occurs at positions 466 and 467. Threonine 468 is modified (phosphothreonine). Phosphoserine is present on residues serine 511, serine 519, serine 520, and serine 537. Lysine 540 is covalently cross-linked (Glycyl lysine isopeptide (Lys-Gly) (interchain with G-Cter in SUMO2)). At lysine 561 the chain carries N6-acetyllysine. Serine 563 bears the Phosphoserine mark. Lysine 564 participates in a covalent cross-link: Glycyl lysine isopeptide (Lys-Gly) (interchain with G-Cter in SUMO2). 4 positions are modified to phosphoserine: serine 569, serine 570, serine 579, and serine 581. Positions 580-594 (SSKKKKKFHKASQED) are enriched in basic residues.

This sequence belongs to the NOP5/NOP56 family. In terms of assembly, part of a large pre-ribosomal ribonucleoprotein (RNP) complex, that consists of at least 62 ribosomal proteins, 45 nonribosomal proteins and both pre-rRNA and mature rRNA species. Within this complex directly interacts with TCOF1 in an RNA-independent manner. Core component of box C/D small nucleolar ribonucleoprotein (snoRNP) particles; the core proteins SNU13, NOP56, NOP58 and FBL or FBLL1 assemble stepwise onto the snoRNA. Interacts with NOP1 and NOP58. Interacts with NUFIP1, RUVBL1 and RUVBL2; RUVBL1:RUVBL2 seem to bridge the association of NOP56 with NUFIP1. Part of the small subunit (SSU) processome, composed of more than 70 proteins and the RNA chaperone small nucleolar RNA (snoRNA) U3. Interacts with NOP2 and FBL.

It localises to the nucleus. The protein localises to the nucleolus. The protein resides in the cytoplasm. It is found in the nucleoplasm. Its function is as follows. Involved in the early to middle stages of 60S ribosomal subunit biogenesis. Required for the biogenesis of box C/D snoRNAs such U3, U8 and U14 snoRNAs. Part of the small subunit (SSU) processome, first precursor of the small eukaryotic ribosomal subunit. During the assembly of the SSU processome in the nucleolus, many ribosome biogenesis factors, an RNA chaperone and ribosomal proteins associate with the nascent pre-rRNA and work in concert to generate RNA folding, modifications, rearrangements and cleavage as well as targeted degradation of pre-ribosomal RNA by the RNA exosome. Core component of box C/D small nucleolar ribonucleoprotein (snoRNP) complexes that function in methylation of multiple sites on ribosomal RNAs (rRNAs) and messenger RNAs (mRNAs). This chain is Nucleolar protein 56, found in Homo sapiens (Human).